The sequence spans 478 residues: PRAME family member 26 (478 aa).

The LRR 1; degenerate repeat unit spans residues 99–126 (RWKLQVLDLQDVCENFWMVWSEAMARGC). The LRR 2; degenerate repeat unit spans residues 181–205 (HLCCKKLKILGMPFRNIRSILKMVN). Residues 206 to 232 (LDCIQEVEVNCKWVLPILTQFTPYLGH) form an LRR 3; degenerate repeat. Residues 233-268 (MRNLQKLVLSHMDVSRYVSPEQKKEIVTQFTTQFLK) form an LRR 4; degenerate repeat. LRR repeat units lie at residues 269–294 (LHCL…LSCL), 295–326 (KTSL…SQLK), 327–347 (TLDL…QILL), 351–378 (AATL…ALSR), and 379–403 (CFEL…LLSH).

Belongs to the PRAME family.

The polypeptide is PRAME family member 26 (Homo sapiens (Human)).